The following is a 72-amino-acid chain: Prophage late control protein OgrK (72 aa).

In terms of biological role, cryptic version of the phage P2 OGR protein which acts as an activator of P2 late transcription. This chain is Prophage late control protein OgrK (ogrK), found in Escherichia coli (strain K12).